Here is a 525-residue protein sequence, read N- to C-terminus: Anti-silencing protein 2 (525 aa).

The interval 467–525 (LPRVPTDSPQLPSKDKSQETAKKDDRPKLVANEPVTLDTSTPPVAQSLADSKHCSGLHK) is disordered. Residues 479 to 494 (SKDKSQETAKKDDRPK) are compositionally biased toward basic and acidic residues.

In terms of biological role, derepression of silent mating type loci when overexpressed. The chain is Anti-silencing protein 2 (ASF2) from Saccharomyces cerevisiae (strain ATCC 204508 / S288c) (Baker's yeast).